The primary structure comprises 419 residues: Putative competence-damage inducible protein (419 aa).

The protein belongs to the CinA family.

This is Putative competence-damage inducible protein from Lysinibacillus sphaericus (strain C3-41).